We begin with the raw amino-acid sequence, 383 residues long: Lipid-A-disaccharide synthase (383 aa).

The protein belongs to the LpxB family.

It catalyses the reaction 2-N,3-O-bis[(3R)-3-hydroxytetradecanoyl]-alpha-D-glucosaminyl 1-phosphate + UDP-2-N,3-O-bis[(3R)-3-hydroxytetradecanoyl]-alpha-D-glucosamine = lipid A disaccharide (E. coli) + UDP + H(+). The enzyme catalyses a lipid X + a UDP-2-N,3-O-bis[(3R)-3-hydroxyacyl]-alpha-D-glucosamine = a lipid A disaccharide + UDP + H(+). It participates in glycolipid biosynthesis; lipid IV(A) biosynthesis; lipid IV(A) from (3R)-3-hydroxytetradecanoyl-[acyl-carrier-protein] and UDP-N-acetyl-alpha-D-glucosamine: step 5/6. Its function is as follows. Condensation of UDP-2,3-diacylglucosamine and 2,3-diacylglucosamine-1-phosphate to form lipid A disaccharide, a precursor of lipid A, a phosphorylated glycolipid that anchors the lipopolysaccharide to the outer membrane of the cell. This is Lipid-A-disaccharide synthase from Klebsiella pneumoniae (strain 342).